Reading from the N-terminus, the 173-residue chain is NADH-ubiquinone oxidoreductase chain 6 (173 aa).

A run of 5 helical transmembrane segments spans residues 1 to 21 (MTYFVMFLGFCFILGAVAVAS), 27 to 47 (YGVLGLVVGSVVGCGWLLSLG), 48 to 68 (VSFISLALFLVYLGGMLVVFV), 87 to 107 (VVIYGVGLVLVVLVGIVVGDF), and 139 to 159 (WGAGLFLVAGWGLLLTLFVVL).

Belongs to the complex I subunit 6 family.

It is found in the mitochondrion membrane. It catalyses the reaction a ubiquinone + NADH + 5 H(+)(in) = a ubiquinol + NAD(+) + 4 H(+)(out). Its function is as follows. Core subunit of the mitochondrial membrane respiratory chain NADH dehydrogenase (Complex I) that is believed to belong to the minimal assembly required for catalysis. Complex I functions in the transfer of electrons from NADH to the respiratory chain. The immediate electron acceptor for the enzyme is believed to be ubiquinone. This is NADH-ubiquinone oxidoreductase chain 6 (MT-ND6) from Struthio camelus (Common ostrich).